The chain runs to 564 residues: MVLYIILAIIVIILIAVGVLFYLRSNKRQIIEKAIERKNEIETLPFDQNLAQLSKLNLKGETKTKYDAMKKDNVESTNKYLAPVEEKIHNAEALLDKFSFNASQSEIDDANELMDSYEQSYQQQLEDVNEIIALYKDNDELYDKCKVDYREMKRDVLANRHQFGEAASLLETEIEKFEPRLEQYEVLKADGNYVQAHNHIAALNEQMKQLRSYMEEIPELIRETQKELPGQFQDLKYGCRDLKVEGYDLDHVKVDSTLQSLKTELSFVEPLISRLELEEANDKLANINDKLDDMYDLIEHEVKAKNDVEETKDIITDNLFKAKDMNYTLQTEIEYVRENYYINESDAQSVRQFENEIQSLISVYDDILKEMSKSAVRYSEVQDNLQYLEDHVTVINDKQEKLQNHLIQLREDEAEAEDNLLRVQSKKEEVYRRLLASNLTSVPERFIIMKNEIDHEVRDVNEQFSERPIHVKQLKDKVSKIVIQMNTFEDEANDVLVNAVYAEKLIQYGNRYRKDYSNVDKSLNEAERLFKNNRYKRAIEIAEQALESVEPGVTKHIEEEVIKQ.

The Extracellular portion of the chain corresponds to 1 to 4; the sequence is MVLY. Residues 5–23 form a helical membrane-spanning segment; sequence IILAIIVIILIAVGVLFYL. The Cytoplasmic segment spans residues 24-564; sequence RSNKRQIIEK…KHIEEEVIKQ (541 aa). Coiled coils occupy residues 99–138, 190–223, 271–300, 350–435, and 471–550; these read SFNA…YKDN, DGNY…LIRE, LISR…LIEH, VRQF…RRLL, and VKQL…ESVE.

This sequence belongs to the EzrA family.

Its subcellular location is the cell membrane. Its function is as follows. Negative regulator of FtsZ ring formation; modulates the frequency and position of FtsZ ring formation. Inhibits FtsZ ring formation at polar sites. Interacts either with FtsZ or with one of its binding partners to promote depolymerization. The polypeptide is Septation ring formation regulator EzrA (Staphylococcus aureus (strain JH1)).